Here is a 1307-residue protein sequence, read N- to C-terminus: CRISPR-associated endonuclease Cas12a (1307 aa).

Residues methionine 1–glycine 35 are WED-I (OBD-I). The segment at phenylalanine 36–leucine 320 is REC1 (helical-I). Tyrosine 47–lysine 51 contributes to the crRNA binding site. A coiled-coil region spans residues glutamate 74–isoleucine 106. Residues asparagine 175–arginine 176 and lysine 307–leucine 310 contribute to the crRNA site. A WED-II (helical-II) region spans residues glutamate 321–tyrosine 526. Residues serine 527–phenylalanine 598 are WED-II (OBD-I). Positions proline 599–lysine 607 form a DNA-binding region, PAM-binding on target DNA. Residues proline 599–leucine 718 form a PI (LHD) region. The segment at tyrosine 719–serine 884 is WED-III (OBD-III). Lysine 752–histidine 761 is a binding site for crRNA. Residues lysine 780 to glycine 783 constitute a DNA-binding region (target DNA). Histidine 800 (for pre-crRNA processing) is an active-site residue. Methionine 806 to asparagine 808 is a binding site for crRNA. Residues lysine 809 and lysine 860 each act as for pre-crRNA processing in the active site. Positions proline 885–tyrosine 940 are ruvC-I. Catalysis depends on aspartate 908, which acts as the For DNase activity of RuvC domain. The bridge helix stretch occupies residues glutamine 941 to alanine 957. Residues arginine 951–lysine 968 constitute a DNA-binding region (target DNA). Positions tryptophan 958–proline 1066 are ruvC-II. Residue glutamate 993 is the For DNase activity of RuvC domain of the active site. The segment at residues serine 1051–alanine 1053 is a DNA-binding region (target DNA). Positions alanine 1067 to alanine 1262 are nuclease domain. Catalysis depends on arginine 1226, which acts as the For DNase activity of nuclease domain. Residue aspartate 1263 is the For DNase activity of RuvC domain of the active site. Residues aspartate 1263–asparagine 1307 are ruvC-III.

The protein belongs to the CRISPR-associated endonuclease Cas12a family. Monomer. It depends on Mg(2+) as a cofactor.

The enzyme catalyses Endonucleolytic cleavage to 5'-phosphodinucleotide and 5'-phosphooligonucleotide end-products.. The catalysed reaction is RNA = a 5'-hydroxy-ribonucleotide + n nucleoside-2',3'-cyclophosphates.. Its function is as follows. CRISPR (clustered regularly interspaced short palindromic repeat), is an adaptive immune system that provides protection against mobile genetic elements (viruses, transposable elements and conjugative plasmids). CRISPR clusters contain sequences complementary to antecedent mobile elements and target invading nucleic acids. CRISPR clusters are transcribed and processed into CRISPR RNA (crRNA). Recognizes a short motif in the CRISPR repeat sequences (the 5' PAM or protospacer adjacent motif, TTTN in this organism) to help distinguish self versus nonself, as targets within the bacterial CRISPR locus do not have PAMs. Has dsDNA endonuclease activity, results in staggered 4-base 5' overhangs 19 and 22 bases downstream of the PAM on the non-targeted and targeted strand respectively. Non-target strand cleavage by the RuvC domain is probably a prerequisite of target strand cleavage by the Nuc domain. Protects E.coli against plasmids and bacteriophage M13mp18, phage T4 with hydroxymethyl or unmodified (but not glycosylated) cytosines and to a lesser extent against lambda and VpaE1 phage. In this CRISPR system correct processing of pre-crRNA requires only this protein and the CRISPR locus. In Acidaminococcus sp. (strain BV3L6), this protein is CRISPR-associated endonuclease Cas12a.